Consider the following 214-residue polypeptide: Stringent starvation protein A homolog (214 aa).

Residues 9 to 87 (SVMSLFSDKN…YLDERFPHPP (79 aa)) enclose the GST N-terminal domain. Residues 92-209 (YPVLRGKSRL…SIGGSAPKHL (118 aa)) enclose the GST C-terminal domain.

Belongs to the GST superfamily. HSP26 family.

Its function is as follows. Forms an equimolar complex with the RNA polymerase holoenzyme (RNAP) but not with the core enzyme. This is Stringent starvation protein A homolog (sspA) from Haemophilus ducreyi (strain 35000HP / ATCC 700724).